The following is a 225-amino-acid chain: MAKQRPATLSVYLYIPNIVGYMRVLLNCIAFSVCFSNKTLFSLLYFFSFCCDAVDGWCARKFNQVSTFGAVLDMVTDRVSTACLLVILSQIYRPSLVFLSLLALDIASHWLQMYSTFLSGKTSHKDVKDSTSWLFRLYYGNRMFMGYCCVSCEVLYIILLLIATNQTENLMNVVVKSLMQISPLSLLLALSIFGWSIKQIINVIQMKTAADVCVLYDIEKQHKKP.

2 helical membrane passes run 6–26 and 29–49; these read PATL…RVLL and IAFS…FFSF. Mg(2+) is bound by residues D52 and D55. A CDP-1,2-diacyl-sn-glycerol-binding residues include G56, R60, and S66. 2 residues coordinate Mg(2+): D73 and D77. The active-site Proton acceptor is D77. 3 helical membrane passes run 84–104, 143–163, and 184–204; these read LLVI…LLAL, MFMG…LLIA, and LSLL…INVI.

It belongs to the CDP-alcohol phosphatidyltransferase class-I family. The cofactor is Mg(2+). Mn(2+) serves as cofactor.

The protein localises to the membrane. It carries out the reaction a CDP-1,2-diacyl-sn-glycerol + myo-inositol = a 1,2-diacyl-sn-glycero-3-phospho-(1D-myo-inositol) + CMP + H(+). Its function is as follows. Catalyzes the biosynthesis of phosphatidylinositol (PtdIns) as well as PtdIns:inositol exchange reaction. May thus act to reduce an excessive cellular PtdIns content. The exchange activity is due to the reverse reaction of PtdIns synthase and is dependent on CMP, which is tightly bound to the enzyme. The polypeptide is Probable CDP-diacylglycerol--inositol 3-phosphatidyltransferase 2 (PIS2) (Arabidopsis thaliana (Mouse-ear cress)).